The primary structure comprises 328 residues: DNA polymerase III subunit delta' (328 aa).

As to quaternary structure, DNA polymerase III contains a core (composed of alpha, epsilon and theta chains) that associates with a tau subunit. This core dimerizes to form the POLIII' complex. PolIII' associates with the gamma complex (composed of gamma, delta, delta', psi and chi chains) and with the beta chain to form the complete DNA polymerase III complex.

The enzyme catalyses DNA(n) + a 2'-deoxyribonucleoside 5'-triphosphate = DNA(n+1) + diphosphate. In terms of biological role, DNA polymerase III is a complex, multichain enzyme responsible for most of the replicative synthesis in bacteria. This DNA polymerase also exhibits 3' to 5' exonuclease activity. In Pseudomonas aeruginosa (strain ATCC 15692 / DSM 22644 / CIP 104116 / JCM 14847 / LMG 12228 / 1C / PRS 101 / PAO1), this protein is DNA polymerase III subunit delta' (holB).